The sequence spans 259 residues: Aspartate/glutamate leucyltransferase (259 aa).

The protein belongs to the R-transferase family. Bpt subfamily.

It localises to the cytoplasm. It carries out the reaction N-terminal L-glutamyl-[protein] + L-leucyl-tRNA(Leu) = N-terminal L-leucyl-L-glutamyl-[protein] + tRNA(Leu) + H(+). The catalysed reaction is N-terminal L-aspartyl-[protein] + L-leucyl-tRNA(Leu) = N-terminal L-leucyl-L-aspartyl-[protein] + tRNA(Leu) + H(+). Functions in the N-end rule pathway of protein degradation where it conjugates Leu from its aminoacyl-tRNA to the N-termini of proteins containing an N-terminal aspartate or glutamate. This chain is Aspartate/glutamate leucyltransferase, found in Rhizobium meliloti (strain 1021) (Ensifer meliloti).